The chain runs to 135 residues: Small ribosomal subunit protein uS12 (135 aa).

Residue Asp89 is modified to 3-methylthioaspartic acid. Residues 106–135 (GVKDRKQGRSKYGAKRPKPGQAPAAAGKKK) form a disordered region. Over residues 113–123 (GRSKYGAKRPK) the composition is skewed to basic residues. The segment covering 124-135 (PGQAPAAAGKKK) has biased composition (low complexity).

This sequence belongs to the universal ribosomal protein uS12 family. In terms of assembly, part of the 30S ribosomal subunit. Contacts proteins S8 and S17. May interact with IF1 in the 30S initiation complex.

Its function is as follows. With S4 and S5 plays an important role in translational accuracy. Interacts with and stabilizes bases of the 16S rRNA that are involved in tRNA selection in the A site and with the mRNA backbone. Located at the interface of the 30S and 50S subunits, it traverses the body of the 30S subunit contacting proteins on the other side and probably holding the rRNA structure together. The combined cluster of proteins S8, S12 and S17 appears to hold together the shoulder and platform of the 30S subunit. This is Small ribosomal subunit protein uS12 from Synechococcus sp. (strain JA-3-3Ab) (Cyanobacteria bacterium Yellowstone A-Prime).